A 439-amino-acid chain; its full sequence is Xylose isomerase (439 aa).

Catalysis depends on residues H101 and D104. Residues E232, E268, H271, D296, D307, D309, and D339 each coordinate Mg(2+).

It belongs to the xylose isomerase family. As to quaternary structure, homotetramer. Mg(2+) serves as cofactor.

It localises to the cytoplasm. The enzyme catalyses alpha-D-xylose = alpha-D-xylulofuranose. The sequence is that of Xylose isomerase from Histophilus somni (strain 2336) (Haemophilus somnus).